The sequence spans 248 residues: Chromatin target of PRMT1 protein (248 aa).

N-acetylalanine is present on alanine 2. Threonine 33 is subject to Phosphothreonine. A phosphoserine mark is found at serine 40, serine 49, and serine 64. Lysine 70 is covalently cross-linked (Glycyl lysine isopeptide (Lys-Gly) (interchain with G-Cter in SUMO2)). Residues 151 to 204 (LRRGGVRGRGGPGRGGLGRGAMGRGGIGGRGRGMIGRGRGGFGGRGRGRGRGRG) form a disordered region. The segment at 153-206 (RGGVRGRGGPGRGGLGRGAMGRGGIGGRGRGMIGRGRGGFGGRGRGRGRGRGAL) is interaction with PRMT1. The span at 157–195 (RGRGGPGRGGLGRGAMGRGGIGGRGRGMIGRGRGGFGGR) shows a compositional bias: gly residues. Residues 194–203 (GRGRGRGRGR) carry the GAR motif; involved in 5hmC binding motif. Residue threonine 242 is modified to Phosphothreonine.

Interacts with PRMT1 and PRMT5. Interacts with the 5FMC complex; the interaction is methylation-dependent. Interacts with FYTTD1, SET and PRC1 complex members CBX4, RNF2 and PHC2; the interactions are methylation-independent. Interacts with ZNF148. Component of the transcription/export (TREX) complex at least composed of ALYREF/THOC4, DDX39B, SARNP/CIP29, CHTOP and the THO subcomplex; TREX seems to have dynamic structure involving ATP-dependent remodeling; in the complex interacts (methylated) with ALYREF/THOC4 and with DDX39B in a methylation-independent manner. Interacts (methylated) with NXF1; the interaction is mutually exclusive with the NXF1:THOC5 interaction. Interacts with WDR77 and ERH. Post-translationally, asymmetrically methylated by PRMT1. Symmetrically methylated by PRMT5. In terms of tissue distribution, expressed in an erythroid progenitor cell line derived from peripheral blood. Expressed in glioblastoma cells.

It is found in the nucleus. The protein localises to the nucleolus. Its subcellular location is the nucleoplasm. It localises to the nucleus speckle. Functionally, plays an important role in the ligand-dependent activation of estrogen receptor target genes. May play a role in the silencing of fetal globin genes. Recruits the 5FMC complex to ZNF148, leading to desumoylation of ZNF148 and subsequent transactivation of ZNF148 target genes. Plays an important role in the tumorigenicity of glioblastoma cells. Binds to 5-hydroxymethylcytosine (5hmC) and associates with the methylosome complex containing PRMT1, PRMT5, MEP50 and ERH. The CHTOP-methylosome complex associated with 5hmC is recruited to selective sites on the chromosome, where it methylates H4R3 and activates the transcription of genes involved in glioblastomagenesis. In terms of biological role, required for effective mRNA nuclear export and is a component of the TREX complex which is thought to couple mRNA transcription, processing and nuclear export, and specifically associates with spliced mRNA and not with unspliced pre-mRNA. TREX is recruited to spliced mRNAs by a transcription-independent mechanism, binds to mRNA upstream of the exon-junction complex (EJC) and is recruited in a splicing- and cap-dependent manner to a region near the 5' end of the mRNA where it functions in mRNA export to the cytoplasm via the TAP/NFX1 pathway. The TREX complex is essential for the export of Kaposi's sarcoma-associated herpesvirus (KSHV) intronless mRNAs and infectious virus production. Stimulates DDX39B ATPase and helicase activities. In cooperation with ALYREF/THOC4 enhances NXF1 RNA binding activity. The chain is Chromatin target of PRMT1 protein (CHTOP) from Homo sapiens (Human).